The chain runs to 93 residues: Small ribosomal subunit protein bS18 (93 aa).

Belongs to the bacterial ribosomal protein bS18 family. As to quaternary structure, part of the 30S ribosomal subunit. Forms a tight heterodimer with protein bS6.

Functionally, binds as a heterodimer with protein bS6 to the central domain of the 16S rRNA, where it helps stabilize the platform of the 30S subunit. In Acidovorax ebreus (strain TPSY) (Diaphorobacter sp. (strain TPSY)), this protein is Small ribosomal subunit protein bS18.